A 364-amino-acid chain; its full sequence is Protein-glutamate methylesterase/protein-glutamine glutaminase 3 (364 aa).

One can recognise a Response regulatory domain in the interval 7 to 124; it reads RVLIVDDSAS…THALLEASAR (118 aa). Asp-58 bears the 4-aspartylphosphate mark. The CheB-type methylesterase domain occupies 167 to 358; that stretch reads PTTERLVCIG…REIMLWQDAK (192 aa). Active-site residues include Ser-178, His-204, and Asp-300.

It belongs to the CheB family. Phosphorylated by CheA. Phosphorylation of the N-terminal regulatory domain activates the methylesterase activity.

The protein localises to the cytoplasm. It carries out the reaction [protein]-L-glutamate 5-O-methyl ester + H2O = L-glutamyl-[protein] + methanol + H(+). The enzyme catalyses L-glutaminyl-[protein] + H2O = L-glutamyl-[protein] + NH4(+). In terms of biological role, involved in chemotaxis. Part of a chemotaxis signal transduction system that modulates chemotaxis in response to various stimuli. Catalyzes the demethylation of specific methylglutamate residues introduced into the chemoreceptors (methyl-accepting chemotaxis proteins or MCP) by CheR. Also mediates the irreversible deamidation of specific glutamine residues to glutamic acid. This is Protein-glutamate methylesterase/protein-glutamine glutaminase 3 from Rhodopseudomonas palustris (strain BisB18).